A 219-amino-acid polypeptide reads, in one-letter code: Pyridoxine/pyridoxamine 5'-phosphate oxidase (219 aa).

Residues R13–Y16 and K76 contribute to the substrate site. Residues R71–K76, F86–T87, K93, and Q115 contribute to the FMN site. Substrate is bound by residues Y133, R137, and S141. FMN is bound by residues Q150 to S151 and W196. R202–H204 provides a ligand contact to substrate. R206 serves as a coordination point for FMN.

The protein belongs to the pyridoxamine 5'-phosphate oxidase family. As to quaternary structure, homodimer. It depends on FMN as a cofactor.

It carries out the reaction pyridoxamine 5'-phosphate + O2 + H2O = pyridoxal 5'-phosphate + H2O2 + NH4(+). It catalyses the reaction pyridoxine 5'-phosphate + O2 = pyridoxal 5'-phosphate + H2O2. The protein operates within cofactor metabolism; pyridoxal 5'-phosphate salvage; pyridoxal 5'-phosphate from pyridoxamine 5'-phosphate: step 1/1. It functions in the pathway cofactor metabolism; pyridoxal 5'-phosphate salvage; pyridoxal 5'-phosphate from pyridoxine 5'-phosphate: step 1/1. Its function is as follows. Catalyzes the oxidation of either pyridoxine 5'-phosphate (PNP) or pyridoxamine 5'-phosphate (PMP) into pyridoxal 5'-phosphate (PLP). The chain is Pyridoxine/pyridoxamine 5'-phosphate oxidase from Mycobacterium leprae (strain TN).